Here is a 205-residue protein sequence, read N- to C-terminus: Urease accessory protein UreG (205 aa).

GTP is bound at residue G14–T21.

As to quaternary structure, homodimer. UreD, UreF and UreG form a complex that acts as a GTP-hydrolysis-dependent molecular chaperone, activating the urease apoprotein by helping to assemble the nickel containing metallocenter of UreC. The UreE protein probably delivers the nickel.

The protein localises to the cytoplasm. With respect to regulation, activation of apourease within the UreDFG-apoprotein complex is inhibited by zinc, copper and cobalt. In terms of biological role, facilitates the functional incorporation of the urease nickel metallocenter. This process requires GTP hydrolysis, probably effectuated by UreG. This Klebsiella aerogenes (Enterobacter aerogenes) protein is Urease accessory protein UreG.